We begin with the raw amino-acid sequence, 499 residues long: Glycerol kinase (499 aa).

Residue T12 participates in ADP binding. Residues T12, T13, and S14 each coordinate ATP. A sn-glycerol 3-phosphate-binding site is contributed by T12. R16 contacts ADP. Sn-glycerol 3-phosphate is bound by residues R82, E83, and Y134. Residues R82, E83, and Y134 each coordinate glycerol. Position 230 is a phosphohistidine; by HPr (H230). Sn-glycerol 3-phosphate is bound at residue D244. D244 and Q245 together coordinate glycerol. ADP is bound by residues T266 and G309. The ATP site is built by T266, G309, Q313, and G410. ADP is bound by residues G410 and N414.

Belongs to the FGGY kinase family. Homotetramer and homodimer (in equilibrium). In terms of processing, the phosphoenolpyruvate-dependent sugar phosphotransferase system (PTS), including enzyme I, and histidine-containing protein (HPr) are required for the phosphorylation, which leads to the activation of the enzyme.

The enzyme catalyses glycerol + ATP = sn-glycerol 3-phosphate + ADP + H(+). Its pathway is polyol metabolism; glycerol degradation via glycerol kinase pathway; sn-glycerol 3-phosphate from glycerol: step 1/1. Activated by phosphorylation and inhibited by fructose 1,6-bisphosphate (FBP). Its function is as follows. Key enzyme in the regulation of glycerol uptake and metabolism. Catalyzes the phosphorylation of glycerol to yield sn-glycerol 3-phosphate. This is Glycerol kinase from Staphylococcus haemolyticus (strain JCSC1435).